The following is a 191-amino-acid chain: Dirigent protein 3 (191 aa).

Positions 1–21 (MSKLILILTAQILLLTATALA) are cleaved as a signal peptide. N-linked (GlcNAc...) asparagine glycans are attached at residues Asn96 and Asn131.

The protein belongs to the plant dirigent protein family. In terms of assembly, homodimer.

The protein localises to the secreted. Its subcellular location is the extracellular space. The protein resides in the apoplast. Its function is as follows. Dirigent proteins impart stereoselectivity on the phenoxy radical-coupling reaction, yielding optically active lignans from two molecules of coniferyl alcohol in the biosynthesis of lignans, flavonolignans, and alkaloids and thus plays a central role in plant secondary metabolism. The polypeptide is Dirigent protein 3 (DIR3) (Arabidopsis thaliana (Mouse-ear cress)).